Reading from the N-terminus, the 228-residue chain is Carboxy-S-adenosyl-L-methionine synthase (228 aa).

Residues Tyr30, 55-57 (GSS), 79-80 (DN), and 103-104 (DV) each bind S-adenosyl-L-methionine.

It belongs to the class I-like SAM-binding methyltransferase superfamily. Cx-SAM synthase family.

It catalyses the reaction prephenate + S-adenosyl-L-methionine = carboxy-S-adenosyl-L-methionine + 3-phenylpyruvate + H2O. In terms of biological role, catalyzes the conversion of S-adenosyl-L-methionine (SAM) to carboxy-S-adenosyl-L-methionine (Cx-SAM). In Staphylococcus epidermidis (strain ATCC 35984 / DSM 28319 / BCRC 17069 / CCUG 31568 / BM 3577 / RP62A), this protein is Carboxy-S-adenosyl-L-methionine synthase.